A 357-amino-acid polypeptide reads, in one-letter code: Protein RecA (357 aa).

An ATP-binding site is contributed by 71–78 (GPESSGKT).

It belongs to the RecA family.

Its subcellular location is the cytoplasm. Can catalyze the hydrolysis of ATP in the presence of single-stranded DNA, the ATP-dependent uptake of single-stranded DNA by duplex DNA, and the ATP-dependent hybridization of homologous single-stranded DNAs. It interacts with LexA causing its activation and leading to its autocatalytic cleavage. The polypeptide is Protein RecA (Ehrlichia ruminantium (strain Gardel)).